The sequence spans 33 residues: MKENKVQQISHKLINIVVFVAIVEYAYLFLHFY.

Over methionine 1–lysine 12 the chain is Cytoplasmic. A helical transmembrane segment spans residues leucine 13–tyrosine 33.

It localises to the cell inner membrane. This is an uncharacterized protein from Escherichia coli (strain K12).